The sequence spans 476 residues: Nyctalopin (476 aa).

Residues Met1–Ala18 form the signal peptide. In terms of domain architecture, LRRNT spans Thr19–Cys57. 11 LRR repeats span residues Glu58–Thr79, Ser82–Gly103, Arg106–Ala128, Arg131–Pro154, Ala155–Ala177, Asn178–Gly199, Arg202–Asp223, Ala226–Gly247, Arg250–Asp271, Glu274–Asn295, and Gly298–Pro319. Residue Asn92 is glycosylated (N-linked (GlcNAc...) asparagine). An N-linked (GlcNAc...) asparagine glycan is attached at Asn178. A glycan (N-linked (GlcNAc...) asparagine) is linked at Asn295. The 53-residue stretch at Asn331–Asp383 folds into the LRRCT domain. N-linked (GlcNAc...) asparagine glycosylation is found at Asn388, Asn427, Asn434, and Asn438.

This sequence belongs to the small leucine-rich proteoglycan (SLRP) family. SLRP class IV subfamily. Expressed abundantly in retina with lower levels in brain, lung, spleen and testis. Not detected in kidney, heart or liver. In the retina, highest expression found in the inner nuclear layer and ganglion cell layer.

It is found in the secreted. Its subcellular location is the extracellular space. It localises to the extracellular matrix. This is Nyctalopin (Nyx) from Mus musculus (Mouse).